The following is a 177-amino-acid chain: Large ribosomal subunit protein uL6 (177 aa).

It belongs to the universal ribosomal protein uL6 family. In terms of assembly, part of the 50S ribosomal subunit.

Its function is as follows. This protein binds to the 23S rRNA, and is important in its secondary structure. It is located near the subunit interface in the base of the L7/L12 stalk, and near the tRNA binding site of the peptidyltransferase center. The chain is Large ribosomal subunit protein uL6 from Vibrio cholerae serotype O1 (strain ATCC 39315 / El Tor Inaba N16961).